A 319-amino-acid chain; its full sequence is Acetyl-coenzyme A carboxylase carboxyl transferase subunit alpha (319 aa).

The 262-residue stretch at 32-293 (NVDTEVRALE…KAVLLNELEA (262 aa)) folds into the CoA carboxyltransferase C-terminal domain.

It belongs to the AccA family. In terms of assembly, acetyl-CoA carboxylase is a heterohexamer composed of biotin carboxyl carrier protein (AccB), biotin carboxylase (AccC) and two subunits each of ACCase subunit alpha (AccA) and ACCase subunit beta (AccD).

It is found in the cytoplasm. The catalysed reaction is N(6)-carboxybiotinyl-L-lysyl-[protein] + acetyl-CoA = N(6)-biotinyl-L-lysyl-[protein] + malonyl-CoA. Its pathway is lipid metabolism; malonyl-CoA biosynthesis; malonyl-CoA from acetyl-CoA: step 1/1. Its function is as follows. Component of the acetyl coenzyme A carboxylase (ACC) complex. First, biotin carboxylase catalyzes the carboxylation of biotin on its carrier protein (BCCP) and then the CO(2) group is transferred by the carboxyltransferase to acetyl-CoA to form malonyl-CoA. The chain is Acetyl-coenzyme A carboxylase carboxyl transferase subunit alpha from Xylella fastidiosa (strain M12).